Consider the following 515-residue polypeptide: MTDRVIIFDTTLRDGEQALKASLTVKEKLQIALALERLGVDVMEVGFPVSSQGDFESVQTIARHIKNARVAALSRAVDKDIDAAYQALKVAEAFRIHTFIASSALHVEAKLKRSFDDVVGMAVAAVKRARNYTDDVEFSCEDAGRTGIDNICRIVEAAINAGATTVNIPDTVGFCLPNEYGNIIAQVRNRVPNIDKAVISVHCHNDLGMATANSLTAVQNGARQIECTINGIGERAGNTSLEEVVMAMKVRQDFMGVDTRINTQEIHRVSQMVSQLCNMPIQPNKAIVGSNAFAHSSGIHQDGMLKNKNTYEIMSPETIGLKKEKLNLTARSGRAAVKGHMADMGYNEQDYDLDKLYDAFLKLADKKGQVFDYDLEALAFIDMQQGDEDRLVLDKLSAHSTKEYPATAFVQLKLDGEKLSTSSIGGNGPVDAVYNAILNLTGLEIKMSHYNLTAKGEGAEALGQVDIVVEHKGRKFHGVGLATDIVESSALALVHAINAIYRAHKVADIKSHKHH.

The 263-residue stretch at 5–267 (VIIFDTTLRD…DTRINTQEIH (263 aa)) folds into the Pyruvate carboxyltransferase domain. Positions 14, 202, 204, and 238 each coordinate Mn(2+). Positions 392–515 (VLDKLSAHST…VADIKSHKHH (124 aa)) are regulatory domain.

Belongs to the alpha-IPM synthase/homocitrate synthase family. LeuA type 1 subfamily. As to quaternary structure, homodimer. Requires Mn(2+) as cofactor.

The protein localises to the cytoplasm. The enzyme catalyses 3-methyl-2-oxobutanoate + acetyl-CoA + H2O = (2S)-2-isopropylmalate + CoA + H(+). Its pathway is amino-acid biosynthesis; L-leucine biosynthesis; L-leucine from 3-methyl-2-oxobutanoate: step 1/4. Its function is as follows. Catalyzes the condensation of the acetyl group of acetyl-CoA with 3-methyl-2-oxobutanoate (2-ketoisovalerate) to form 3-carboxy-3-hydroxy-4-methylpentanoate (2-isopropylmalate). The protein is 2-isopropylmalate synthase of Haemophilus influenzae (strain 86-028NP).